The sequence spans 111 residues: WAP four-disulfide core domain protein 12 (111 aa).

Residues 1–23 (MGSSSFLVLMVSLALVTLVAAEG) form the signal peptide. The 48-residue stretch at 27–74 (GIEKAGVCPADNIRCFKSDPPQCHTDQDCLGERKCCYLHCGFKCVIPV) folds into the WAP domain. 4 disulfide bridges follow: Cys-34-Cys-62, Cys-41-Cys-66, Cys-49-Cys-61, and Cys-55-Cys-70. The tract at residues 80 to 111 (GGNKDEDVSGPCPEPGWEAKSPGSSSTGCPQK) is disordered. Residues 101 to 111 (PGSSSTGCPQK) show a composition bias toward polar residues.

It localises to the secreted. In terms of biological role, antibacterial protein. Putative acid-stable proteinase inhibitor. The protein is WAP four-disulfide core domain protein 12 (WFDC12) of Macaca mulatta (Rhesus macaque).